The chain runs to 1388 residues: Peroxisomal ATPase PEX6 (1388 aa).

Disordered regions lie at residues 1-29, 169-192, 262-287, 302-323, and 346-365; these read MTTSELVPPPPARRSPRTRRRRQDKPALS, EGTFFRDRPNKGKGKAPAQPDTPE, RGQSAPAIPPNRSLNGVPEDDEDDTA, DAATTEMDTVTETEESDLSGVD, and TTASGVSTMQPGTPMTIGRG. Over residues 14–23 the composition is skewed to basic residues; sequence RSPRTRRRRQ. Positions 169 to 178 are enriched in basic and acidic residues; sequence EGTFFRDRPN. Positions 310–323 are enriched in acidic residues; the sequence is TVTETEESDLSGVD. Residues 346–358 are compositionally biased toward polar residues; the sequence is TTASGVSTMQPGT. An ATP-binding site is contributed by 1034–1041; sequence GPPGTGKT. The tract at residues 1297–1388 is disordered; it reads GPPEKDRQQQ…GTASDDEGLY (92 aa). Residues 1319–1332 show a composition bias toward low complexity; sequence VSGSSVVSKGKGKA.

This sequence belongs to the AAA ATPase family. Interacts with PEX1; forming the PEX1-PEX6 AAA ATPase complex, which is composed of a heterohexamer formed by a trimer of PEX1-PEX6 dimers.

It localises to the cytoplasm. The protein localises to the cytosol. Its subcellular location is the peroxisome membrane. The enzyme catalyses ATP + H2O = ADP + phosphate + H(+). Component of the PEX1-PEX6 AAA ATPase complex, a protein dislocase complex that mediates the ATP-dependent extraction of the PEX5 receptor from peroxisomal membranes, an essential step for PEX5 recycling. Specifically recognizes PEX5 monoubiquitinated at 'Cys-6', and pulls it out of the peroxisome lumen through the PEX2-PEX10-PEX12 retrotranslocation channel. Extraction by the PEX1-PEX6 AAA ATPase complex is accompanied by unfolding of the TPR repeats and release of bound cargo from PEX5. This Colletotrichum orbiculare (strain 104-T / ATCC 96160 / CBS 514.97 / LARS 414 / MAFF 240422) (Cucumber anthracnose fungus) protein is Peroxisomal ATPase PEX6 (PEX6).